The chain runs to 125 residues: Small ribosomal subunit protein uS12 (125 aa).

Positions 9-31 (RQGREVEKIKSKSPAMENSPQRR) are disordered. At Asp-89 the chain carries 3-methylthioaspartic acid. Residues 106 to 125 (GVKDRKQSRSKYGAKRPKKA) are disordered. The span at 113 to 125 (SRSKYGAKRPKKA) shows a compositional bias: basic residues.

Belongs to the universal ribosomal protein uS12 family. Part of the 30S ribosomal subunit. Contacts proteins S8 and S17. May interact with IF1 in the 30S initiation complex.

With S4 and S5 plays an important role in translational accuracy. Its function is as follows. Interacts with and stabilizes bases of the 16S rRNA that are involved in tRNA selection in the A site and with the mRNA backbone. Located at the interface of the 30S and 50S subunits, it traverses the body of the 30S subunit contacting proteins on the other side and probably holding the rRNA structure together. The combined cluster of proteins S8, S12 and S17 appears to hold together the shoulder and platform of the 30S subunit. This Polaromonas sp. (strain JS666 / ATCC BAA-500) protein is Small ribosomal subunit protein uS12.